A 35-amino-acid polypeptide reads, in one-letter code: Photosystem II reaction center protein T (35 aa).

Residues 3 to 23 (ALVYTFLLVSTLGIIFFAIFF) traverse the membrane as a helical segment.

Belongs to the PsbT family. In terms of assembly, PSII is composed of 1 copy each of membrane proteins PsbA, PsbB, PsbC, PsbD, PsbE, PsbF, PsbH, PsbI, PsbJ, PsbK, PsbL, PsbM, PsbT, PsbY, PsbZ, Psb30/Ycf12, at least 3 peripheral proteins of the oxygen-evolving complex and a large number of cofactors. It forms dimeric complexes.

It is found in the plastid. It localises to the chloroplast thylakoid membrane. In terms of biological role, found at the monomer-monomer interface of the photosystem II (PS II) dimer, plays a role in assembly and dimerization of PSII. PSII is a light-driven water plastoquinone oxidoreductase, using light energy to abstract electrons from H(2)O, generating a proton gradient subsequently used for ATP formation. This chain is Photosystem II reaction center protein T, found in Amborella trichopoda.